The sequence spans 407 residues: UDP-N-acetyl-D-mannosamine dehydrogenase (407 aa).

The protein belongs to the UDP-glucose/GDP-mannose dehydrogenase family.

It carries out the reaction UDP-N-acetyl-alpha-D-mannosamine + 2 NAD(+) + H2O = UDP-N-acetyl-alpha-D-mannosaminouronate + 2 NADH + 3 H(+). It participates in capsule biogenesis; capsule polysaccharide biosynthesis. Dehydrogenase involved in the biosynthesis of capsular polysaccharides. Catalyzes the NAD(+)-dependent oxidation of UDP-N-acetyl-D-mannosamine (UDP-ManNAc) to UDP-N-acetyl-D-mannosaminuronic acid (UDP-ManNAcA). This Campylobacter jejuni protein is UDP-N-acetyl-D-mannosamine dehydrogenase.